The sequence spans 245 residues: Type I iodothyronine deiodinase (245 aa).

The Extracellular portion of the chain corresponds to 1–9; the sequence is LSIRVLLHK. A helical; Signal-anchor for type III membrane protein membrane pass occupies residues 10-30; the sequence is LLILLQVTLSVVVGKTMMILF. Topologically, residues 31–245 are cytoplasmic; sequence PDTTKRYILK…EIRAVLEKLK (215 aa). The active site involves selenocysteine 123. Selenocysteine 123 is a non-standard amino acid (selenocysteine).

This sequence belongs to the iodothyronine deiodinase family. Predominantly monomer. Can form homodimers but homodimerization is not essential for enzyme activity.

It localises to the cell membrane. Its subcellular location is the endoplasmic reticulum membrane. The protein localises to the basolateral cell membrane. The enzyme catalyses 3,3',5-triiodo-L-thyronine + iodide + A + H(+) = L-thyroxine + AH2. It catalyses the reaction 3,3',5'-triiodo-L-thyronine + iodide + A + H(+) = L-thyroxine + AH2. The catalysed reaction is 3,3'-diiodo-L-thyronine + iodide + A + H(+) = 3,3',5'-triiodo-L-thyronine + AH2. It carries out the reaction 3,3'-diiodo-L-thyronine + iodide + A + H(+) = 3,3',5-triiodo-L-thyronine + AH2. The enzyme catalyses 3'-iodo-L-thyronine + iodide + A + H(+) = 3',5'-diiodo-L-thyronine + AH2. It catalyses the reaction 3-iodo-L-thyronine + iodide + A + H(+) = 3,5-diiodo-L-thyronine + AH2. The catalysed reaction is 3-iodo-L-thyronine + iodide + A + H(+) = 3,3'-diiodo-L-thyronine + AH2. It carries out the reaction 3,3'-diiodothyronamine + iodide + A + H(+) = 3,3',5'-triiodothyronamine + AH2. The enzyme catalyses 3'-iodothyronamine + iodide + A + H(+) = 3',5'-diiodothyronamine + AH2. It catalyses the reaction 3-iodothyronamine + iodide + A + H(+) = 3,3'-diiodothyronamine + AH2. The catalysed reaction is 3,3'-diiodothyronamine + iodide + A + H(+) = 3,3',5-triiodothyronamine + AH2. It carries out the reaction 3-iodothyronamine + iodide + A + H(+) = 3,5-diiodothyronamine + AH2. The enzyme catalyses 3,3'-diiodo-L-thyronine sulfate + iodide + A + H(+) = 3,3',5'-triiodo-L-thyronine sulfate + AH2. It catalyses the reaction 3,3',5'-triiodo-L-thyronine sulfate + iodide + A + H(+) = L-thyroxine sulfate + AH2. The catalysed reaction is 3,3'-diiodo-L-thyronine sulfate + iodide + A + H(+) = 3,3',5-triiodo-L-thyronine sulfate + AH2. Functionally, plays a crucial role in the metabolism of thyroid hormones (TH) and has specific roles in TH activation and inactivation by deiodination. Catalyzes the deiodiantion of L-thyroxine (T4) to 3,5,3'-triiodothyronine (T3) and 3,3',5'-triiodothyronine (rT3) to 3,3'-diiodothyronine (3,3'-T2) via outer-ring deiodination (ORD). Catalyzes the deiodiantion of T4 to rT3, T3 to 3,3'-T2, 3,5-diiodothyronine (3,5-T2) to 3-monoiodothyronine (3-T1) and 3,3'-T2 to 3-T1 via inner-ring deiodination (IRD). Catalyzes the deiodiantion of 3',5'-diiodothyronine (3',5'-T2) to 3'-monoiodothyronine (3'-T1) via ORD. Catalyzes the phenolic ring deiodinations of 3,3',5'-triiodothyronamine, 3',5'-diiodothyronamine and 3,3'-diiodothyronamine as well as tyrosyl ring deiodinations of 3,5,3'-triiodothyronamine and 3,5-diiodothyronamine. Catalyzes the deiodination of L-thyroxine sulfate and 3,3',5-triiodo-L-thyronine sulfate via IRD and of 3,3',5'-triiodo-L-thyronine sulfate via ORD. In Gallus gallus (Chicken), this protein is Type I iodothyronine deiodinase (DIO1).